The following is a 129-amino-acid chain: Mediator of RNA polymerase II transcription subunit 31-B (129 aa).

The protein belongs to the Mediator complex subunit 31 family. As to quaternary structure, component of the Mediator complex.

The protein resides in the nucleus. Functionally, component of the Mediator complex, a coactivator involved in the regulated transcription of nearly all RNA polymerase II-dependent genes. Mediator functions as a bridge to convey information from gene-specific regulatory proteins to the basal RNA polymerase II transcription machinery. Mediator is recruited to promoters by direct interactions with regulatory proteins and serves as a scaffold for the assembly of a functional preinitiation complex with RNA polymerase II and the general transcription factors. The protein is Mediator of RNA polymerase II transcription subunit 31-B (med31-b) of Xenopus laevis (African clawed frog).